The sequence spans 342 residues: Small GTPase LIP1 (342 aa).

The interval 12–285 is small GTPase-like; the sequence is KEQILAPLCG…FHGDPYKYNN (274 aa). GTP contacts are provided by residues 29–36, 90–94, and 160–163; these read GDSGVGKT, DVSGH, and NKAD. 2 disordered regions span residues 274-313 and 323-342; these read TSFH…TPDN and SVQE…DINV. The span at 323 to 333 shows a compositional bias: polar residues; the sequence is SVQETTNNGSA.

This sequence belongs to the small GTPase superfamily.

Its subcellular location is the nucleus. The protein resides in the cytoplasm. Functional small GTPase that acts as a negative factor controlling the light-dependent period shortening of circadian rhythms and light-induced phase resetting during the subjective night. May protect the clock from excessive or mistimed light. Suppresses red and blue light-mediated photomorphogenesis and is required for light-controlled inhibition of endoreplication and tolerance to salt stress. The entrainment of the circadian clock is independent from the other pleiotropic effects. Could be a regulator of seedling establishment. The protein is Small GTPase LIP1 of Arabidopsis thaliana (Mouse-ear cress).